The sequence spans 118 residues: UPF0295 protein GWCH70_0499 (118 aa).

Helical transmembrane passes span 12–32 (IRTFALSLIFVGFIVMYIGIF) and 42–62 (LFMILGLLFIIASTVVYFWIG).

The protein belongs to the UPF0295 family.

It is found in the cell membrane. In Geobacillus sp. (strain WCH70), this protein is UPF0295 protein GWCH70_0499.